A 541-amino-acid polypeptide reads, in one-letter code: Chaperonin GroEL 2 (541 aa).

ATP-binding positions include 29-32 (TLGP), 86-90 (DGTTT), glycine 413, 476-478 (NAA), and aspartate 492.

This sequence belongs to the chaperonin (HSP60) family. In terms of assembly, forms a cylinder of 14 subunits composed of two heptameric rings stacked back-to-back. Interacts with the co-chaperonin GroES.

Its subcellular location is the secreted. It is found in the capsule. It localises to the cell surface. The protein resides in the cell wall. It catalyses the reaction ATP + H2O + a folded polypeptide = ADP + phosphate + an unfolded polypeptide.. Functionally, together with its co-chaperonin GroES, plays an essential role in assisting protein folding. The GroEL-GroES system forms a nano-cage that allows encapsulation of the non-native substrate proteins and provides a physical environment optimized to promote and accelerate protein folding. This Mycobacterium ulcerans (strain Agy99) protein is Chaperonin GroEL 2.